Reading from the N-terminus, the 262-residue chain is Caffeyl-CoA reductase-Etf complex subunit CarD (262 aa).

The protein belongs to the ETF beta-subunit/FixA family. Part of the homotrimeric caffeyl-CoA reductase-Etf complex composed of (R)-2-hydroxyisocaproyl-CoA dehydratase CarC, and the electron transfer flavoprotein (ETF) alpha (CarE) and beta (CarD) subunits. Requires FAD as cofactor. It depends on AMP as a cofactor.

The protein localises to the cytoplasm. The enzyme catalyses hydrocaffeoyl-CoA + 2 reduced [2Fe-2S]-[ferredoxin] + 2 NAD(+) = (E)-caffeoyl-CoA + 2 oxidized [2Fe-2S]-[ferredoxin] + 2 NADH. Its function is as follows. Caffeyl-CoA reductase-Etf complex catalyzes the reduction of caffeyl-CoA to yield hydrocaffeyl-CoA. It couples the endergonic ferredoxin reduction with NADH as reductant to the exergonic reduction of caffeoyl-CoA with the same reductant. It uses the mechanism of electron bifurcation to overcome the steep energy barrier in ferredoxin reduction. The electron transfer flavoprotein (Etf) mediates the electron transfer between the different donors and acceptors. The complex can also reduce 4-coumaroyl-CoA and feruloyl-CoA. The chain is Caffeyl-CoA reductase-Etf complex subunit CarD from Acetobacterium woodii (strain ATCC 29683 / DSM 1030 / JCM 2381 / KCTC 1655 / WB1).